The primary structure comprises 379 residues: Occlusion-derived virus envelope protein E56 (379 aa).

The chain crosses the membrane as a helical span at residues 156–176 (AGVGVLLAGGAYLTFSAATLV). N-linked (GlcNAc...) asparagine; by host glycosylation occurs at Asn-184. The chain crosses the membrane as a helical span at residues 320-340 (LMPLIWLIGAVLFLGLIIYLI).

This sequence belongs to the baculoviridae E56 family.

It is found in the virion membrane. Functionally, structural protein that is specific for occlusion-derived virus (ODV) envelopes but not of budded virus (BV). The chain is Occlusion-derived virus envelope protein E56 (ODVP6E) from Choristoneura fumiferana nuclear polyhedrosis virus (CfMNPV).